We begin with the raw amino-acid sequence, 176 residues long: Endoribonuclease YbeY (176 aa).

H117, H121, and H127 together coordinate Zn(2+).

This sequence belongs to the endoribonuclease YbeY family. It depends on Zn(2+) as a cofactor.

The protein localises to the cytoplasm. Its function is as follows. Single strand-specific metallo-endoribonuclease involved in late-stage 70S ribosome quality control and in maturation of the 3' terminus of the 16S rRNA. The sequence is that of Endoribonuclease YbeY from Methylocella silvestris (strain DSM 15510 / CIP 108128 / LMG 27833 / NCIMB 13906 / BL2).